A 721-amino-acid polypeptide reads, in one-letter code: Protein mu-NS (721 aa).

The interval 1–13 is interaction with sigma-NS; that stretch reads MASFKGFSANTVP. The segment at 1 to 38 is RNA-binding; that stretch reads MASFKGFSANTVPVSKTRKDTSSLTATPGLRAPSMSSP. The interval 14–40 is interaction with mu-2; sequence VSKTRKDTSSLTATPGLRAPSMSSPVD. The segment at 17-37 is disordered; it reads TRKDTSSLTATPGLRAPSMSS. The segment at 471–721 is involved in the formation of factory-like inclusions; the sequence is QSDTVDGIKL…IDFSVPADEL (251 aa). Coiled coils occupy residues 523-556 and 632-686; these read LLSQ…ADVK and KQAH…NQRQ.

This sequence belongs to the orthoreovirus mu-NS protein family. As to quaternary structure, interacts with mu-2. Interacts with sigma-NS; in viral factories. Interacts with the inner capsid proteins lambda-1 and sigma-2, and outer capsid protein lambda-2; in viral factories. In terms of processing, the N-terminus is blocked.

It localises to the host cytoplasm. Its function is as follows. Non-structural protein implicated with protein sigma-NS in forming the matrix of viral factories, which are large inclusions in the host cytoplasm where replication intermediates are assembled and viral RNA replication takes place. Together with mu-2, recruits the other core proteins to these factories. The sequence is that of Protein mu-NS (M3) from Mammalia (T2J).